Consider the following 394-residue polypeptide: 1-deoxy-D-xylulose 5-phosphate reductoisomerase (394 aa).

NADPH-binding residues include threonine 14, glycine 15, serine 16, isoleucine 17, glycine 40, and asparagine 128. Lysine 129 is a 1-deoxy-D-xylulose 5-phosphate binding site. Residue glutamate 130 coordinates NADPH. Aspartate 154 serves as a coordination point for Mn(2+). Serine 155, glutamate 156, serine 180, and histidine 203 together coordinate 1-deoxy-D-xylulose 5-phosphate. Glutamate 156 provides a ligand contact to Mn(2+). Glycine 209 contacts NADPH. Positions 216, 221, 222, and 225 each coordinate 1-deoxy-D-xylulose 5-phosphate. Glutamate 225 is a Mn(2+) binding site.

Belongs to the DXR family. Mg(2+) is required as a cofactor. The cofactor is Mn(2+).

It catalyses the reaction 2-C-methyl-D-erythritol 4-phosphate + NADP(+) = 1-deoxy-D-xylulose 5-phosphate + NADPH + H(+). It participates in isoprenoid biosynthesis; isopentenyl diphosphate biosynthesis via DXP pathway; isopentenyl diphosphate from 1-deoxy-D-xylulose 5-phosphate: step 1/6. In terms of biological role, catalyzes the NADPH-dependent rearrangement and reduction of 1-deoxy-D-xylulose-5-phosphate (DXP) to 2-C-methyl-D-erythritol 4-phosphate (MEP). The protein is 1-deoxy-D-xylulose 5-phosphate reductoisomerase of Xylella fastidiosa (strain M12).